The following is a 270-amino-acid chain: MLWIEAVRTLSADLEDPFELEFVWRNLHELNKLSWLNLMREKITDQELKLLTEVSKRLHQNEPPQYIVGWAEFRDLKLKVDERVLIPRPETEELVEMILAENEKDSLKILDIGTGSGAIAISLAQARENWSVKASDISKEALTLAAENAEINQANLEFIQSDVLDKITDSFDIIVSNPPYIAFDETYEMDNSVIKYEPDLALFAENQGLAIYQKIADQAVNHLTDNGKIYLEIGYKQGQAVQAIFQEKFTDKLVSIHQDIFGKDRMISVK.

Residues 113 to 117 (GTGSG), Asp-136, and Asn-177 each bind S-adenosyl-L-methionine. 177–180 (NPPY) is a binding site for substrate.

It belongs to the protein N5-glutamine methyltransferase family. PrmC subfamily.

The catalysed reaction is L-glutaminyl-[peptide chain release factor] + S-adenosyl-L-methionine = N(5)-methyl-L-glutaminyl-[peptide chain release factor] + S-adenosyl-L-homocysteine + H(+). Methylates the class 1 translation termination release factors RF1/PrfA and RF2/PrfB on the glutamine residue of the universally conserved GGQ motif. This is Release factor glutamine methyltransferase from Lactococcus lactis subsp. lactis (strain IL1403) (Streptococcus lactis).